Here is a 268-residue protein sequence, read N- to C-terminus: Xyloglucan endotransglucosylase protein 7 (268 aa).

One can recognise a GH16 domain in the interval 1–196 (MNAEGGNLHR…WTKAPFTASY (196 aa)). Residue E82 is the Nucleophile of the active site. E86 serves as the catalytic Proton donor. E86 is a binding site for xyloglucan. N-linked (GlcNAc...) asparagine glycosylation is present at N90. Xyloglucan contacts are provided by residues 99–101 (HTN), 109–111 (NRE), 175–176 (DW), and G180. Cystine bridges form between C204-C213 and C251-C265. R256 contacts xyloglucan.

Belongs to the glycosyl hydrolase 16 family. XTH group 2 subfamily. Post-translationally, contains at least one intrachain disulfide bond essential for its enzymatic activity. In terms of tissue distribution, expressed at a very high level in flowers and stems (picked at anthesis), and at a lower level in ripe leaves and fruits.

The protein resides in the cytoplasm. It carries out the reaction breaks a beta-(1-&gt;4) bond in the backbone of a xyloglucan and transfers the xyloglucanyl segment on to O-4 of the non-reducing terminal glucose residue of an acceptor, which can be a xyloglucan or an oligosaccharide of xyloglucan.. Functionally, catalyzes xyloglucan endotransglycosylation (XET). Cleaves and religates xyloglucan polymers. Does not catalyze xyloglucan endohydrolysis (XEH). Probably involved in cell wall assembly and synthesis in fast growing tissues and in the maintenance of firmness in mature fruits. In Diospyros kaki (Kaki persimmon), this protein is Xyloglucan endotransglucosylase protein 7.